The sequence spans 66 residues: LAVQDLKKQPLQDVAKRVEEIWQEFLAPGAPSAINLDSHSYEITSQNVKDGGRYTFEDAQEHIYKL.

Positions 1-66 constitute an RGS domain; the sequence is LAVQDLKKQP…EDAQEHIYKL (66 aa).

In terms of assembly, interacts with GNB5. Interacts with RGS7BP, leading to regulate the subcellular location of the heterodimer formed with GNB5. Interacts with GNAI1.

It localises to the cytoplasm. The protein resides in the cytosol. It is found in the membrane. The protein localises to the nucleus. Its subcellular location is the cell membrane. In terms of biological role, regulates G protein-coupled receptor signaling cascades. Inhibits signal transduction by increasing the GTPase activity of G protein alpha subunits, thereby driving them into their inactive GDP-bound form. The RGS6/GNB5 dimer enhances GNAO1 GTPase activity. The chain is Regulator of G-protein signaling 6 (Rgs6) from Rattus norvegicus (Rat).